The sequence spans 860 residues: Photoactivated adenylate cyclase subunit beta (860 aa).

The BLUF 1 domain maps to 56–149 (LRRLMYLSKS…GRMYGDWHMK (94 aa)). The 129-residue stretch at 205–333 (VVTFIYLVEF…DCINTTSRIA (129 aa)) folds into the Guanylate cyclase 1 domain. A disordered region spans residues 420–443 (RPPIFDDTPKGKPRPRTPGYGGRQ). In terms of domain architecture, BLUF 2 spans 471-563 (LTTLTYISQA…RAYPAEWTLT (93 aa)). Residues 619–748 (VMLATDICSF…AVSARVMEVE (130 aa)) form the Guanylate cyclase 2 domain. Residues 819-860 (KPLALEPEEAKQDYRVSPGRMRHGDSGRRSNSAQGKRSTQVR) form a disordered region. The segment covering 847–860 (RSNSAQGKRSTQVR) has biased composition (polar residues).

It belongs to the adenylyl cyclase class-4/guanylyl cyclase family. In terms of assembly, heterotetramer of two alpha and two beta subunits. It depends on FAD as a cofactor.

The protein resides in the cell projection. The protein localises to the cilium. Its subcellular location is the flagellum. It catalyses the reaction ATP = 3',5'-cyclic AMP + diphosphate. Functionally, acts as a photoreceptor for the step-up photophobic response. The chain is Photoactivated adenylate cyclase subunit beta from Euglena longa (Euglenophycean alga).